The primary structure comprises 353 residues: MTAILERRESESLWGRFCNWITSTENRLYIGWFGVLMIPTLLTATSVFIIAFIAAPPVDIDGIREPVSGSLLYGNNIISGAIIPTSAAIGLHFYPIWEAASVDEWLYNGGPYELIVLHFLLGVACYMGREWELSFRLGMRPWIAVAYSAPVAAATAVFLIYPIGQGSFSDGMPLGISGTFNFMIVFQAEHNILMHPFHMLGVAGVFGGSLFSAMHGSLVTSSLIRETTENESANEGYRFGQEEETYNIVAAHGYFGRLIFQYASFNNSRSLHFFLAAWPVVGIWFTALGISTMAFNLNGFNFNQSVVDSQGRVINTWADIINRANLGMEVMHERNAHNFPLDLAVVEAPSTNG.

T2 carries the N-acetylthreonine modification. T2 bears the Phosphothreonine mark. Helical transmembrane passes span 29 to 46 (YIGWFGVLMIPTLLTATS), 118 to 133 (HFLLGVACYMGREWEL), and 142 to 156 (WIAVAYSAPVAAATA). H118 serves as a coordination point for chlorophyll a. Position 126 (Y126) interacts with pheophytin a. [CaMn4O5] cluster contacts are provided by D170 and E189. Residues 197-218 (FHMLGVAGVFGGSLFSAMHGSL) form a helical membrane-spanning segment. H198 is a chlorophyll a binding site. A quinone-binding positions include H215 and 264–265 (SF). H215 contacts Fe cation. Residue H272 participates in Fe cation binding. Residues 274-288 (FLAAWPVVGIWFTAL) traverse the membrane as a helical segment. Residues H332, E333, D342, and A344 each coordinate [CaMn4O5] cluster. A propeptide spanning residues 345 to 353 (VVEAPSTNG) is cleaved from the precursor.

This sequence belongs to the reaction center PufL/M/PsbA/D family. PSII is composed of 1 copy each of membrane proteins PsbA, PsbB, PsbC, PsbD, PsbE, PsbF, PsbH, PsbI, PsbJ, PsbK, PsbL, PsbM, PsbT, PsbX, PsbY, PsbZ, Psb30/Ycf12, at least 3 peripheral proteins of the oxygen-evolving complex and a large number of cofactors. It forms dimeric complexes. It depends on The D1/D2 heterodimer binds P680, chlorophylls that are the primary electron donor of PSII, and subsequent electron acceptors. It shares a non-heme iron and each subunit binds pheophytin, quinone, additional chlorophylls, carotenoids and lipids. D1 provides most of the ligands for the Mn4-Ca-O5 cluster of the oxygen-evolving complex (OEC). There is also a Cl(-1) ion associated with D1 and D2, which is required for oxygen evolution. The PSII complex binds additional chlorophylls, carotenoids and specific lipids. as a cofactor. Tyr-161 forms a radical intermediate that is referred to as redox-active TyrZ, YZ or Y-Z. In terms of processing, C-terminally processed by CTPA; processing is essential to allow assembly of the oxygen-evolving complex and thus photosynthetic growth.

Its subcellular location is the plastid. The protein resides in the chloroplast thylakoid membrane. The catalysed reaction is 2 a plastoquinone + 4 hnu + 2 H2O = 2 a plastoquinol + O2. Its function is as follows. Photosystem II (PSII) is a light-driven water:plastoquinone oxidoreductase that uses light energy to abstract electrons from H(2)O, generating O(2) and a proton gradient subsequently used for ATP formation. It consists of a core antenna complex that captures photons, and an electron transfer chain that converts photonic excitation into a charge separation. The D1/D2 (PsbA/PsbD) reaction center heterodimer binds P680, the primary electron donor of PSII as well as several subsequent electron acceptors. In Aethionema grandiflorum (Persian stone-cress), this protein is Photosystem II protein D1.